Here is a 321-residue protein sequence, read N- to C-terminus: Acetyl-coenzyme A carboxylase carboxyl transferase subunit alpha (321 aa).

A CoA carboxyltransferase C-terminal domain is found at 39–293 (RLQQKSQNLA…RRALGDALRQ (255 aa)).

This sequence belongs to the AccA family. As to quaternary structure, acetyl-CoA carboxylase is a heterohexamer composed of biotin carboxyl carrier protein (AccB), biotin carboxylase (AccC) and two subunits each of ACCase subunit alpha (AccA) and ACCase subunit beta (AccD).

Its subcellular location is the cytoplasm. The catalysed reaction is N(6)-carboxybiotinyl-L-lysyl-[protein] + acetyl-CoA = N(6)-biotinyl-L-lysyl-[protein] + malonyl-CoA. The protein operates within lipid metabolism; malonyl-CoA biosynthesis; malonyl-CoA from acetyl-CoA: step 1/1. Functionally, component of the acetyl coenzyme A carboxylase (ACC) complex. First, biotin carboxylase catalyzes the carboxylation of biotin on its carrier protein (BCCP) and then the CO(2) group is transferred by the carboxyltransferase to acetyl-CoA to form malonyl-CoA. This chain is Acetyl-coenzyme A carboxylase carboxyl transferase subunit alpha, found in Bordetella bronchiseptica (strain ATCC BAA-588 / NCTC 13252 / RB50) (Alcaligenes bronchisepticus).